The chain runs to 407 residues: Probable tRNA sulfurtransferase (407 aa).

Residues 61–165 (NEITNRLSKI…LDAIYMYEEV (105 aa)) enclose the THUMP domain. Residues 183–184 (ML), 208–209 (HF), Arg265, Gly287, and Gln296 contribute to the ATP site.

Belongs to the ThiI family.

Its subcellular location is the cytoplasm. The catalysed reaction is [ThiI sulfur-carrier protein]-S-sulfanyl-L-cysteine + a uridine in tRNA + 2 reduced [2Fe-2S]-[ferredoxin] + ATP + H(+) = [ThiI sulfur-carrier protein]-L-cysteine + a 4-thiouridine in tRNA + 2 oxidized [2Fe-2S]-[ferredoxin] + AMP + diphosphate. The enzyme catalyses [ThiS sulfur-carrier protein]-C-terminal Gly-Gly-AMP + S-sulfanyl-L-cysteinyl-[cysteine desulfurase] + AH2 = [ThiS sulfur-carrier protein]-C-terminal-Gly-aminoethanethioate + L-cysteinyl-[cysteine desulfurase] + A + AMP + 2 H(+). Its pathway is cofactor biosynthesis; thiamine diphosphate biosynthesis. Functionally, catalyzes the ATP-dependent transfer of a sulfur to tRNA to produce 4-thiouridine in position 8 of tRNAs, which functions as a near-UV photosensor. Also catalyzes the transfer of sulfur to the sulfur carrier protein ThiS, forming ThiS-thiocarboxylate. This is a step in the synthesis of thiazole, in the thiamine biosynthesis pathway. The sulfur is donated as persulfide by IscS. The polypeptide is Probable tRNA sulfurtransferase (Staphylococcus aureus (strain MRSA252)).